We begin with the raw amino-acid sequence, 354 residues long: Rhodopsin (354 aa).

The Extracellular portion of the chain corresponds to 1 to 36 (MNGTEGPNFYIPMSNKTGVVRSPFEYPQYYLAEPWQ). Residues Asn2 and Asn15 are each glycosylated (N-linked (GlcNAc...) asparagine). A helical transmembrane segment spans residues 37 to 61 (YSILCAYMFLLILLGFPINFMTLYV). At 62-73 (TIQHKKLRTPLN) the chain is on the cytoplasmic side. A helical membrane pass occupies residues 74-96 (YILLNLAFANHFMVLCGFTVTMY). The Extracellular portion of the chain corresponds to 97–110 (SSMNGYFILGATGC). Cys110 and Cys187 are joined by a disulfide. Residues 111–133 (YVEGFFATLGGEIALWSLVVLAI) traverse the membrane as a helical segment. The 'Ionic lock' involved in activated form stabilization signature appears at 134–136 (ERY). The Cytoplasmic portion of the chain corresponds to 134 to 152 (ERYVVVCKPMSNFRFSENH). The chain crosses the membrane as a helical span at residues 153–173 (AVMGVAFTWIMALSCAVPPLL). The Extracellular segment spans residues 174-202 (GWSRYIPEGMQCSCGVDYYTLKPEVNNES). A helical membrane pass occupies residues 203–224 (FVIYMFVVHFTIPLIIIFFCYG). The Cytoplasmic portion of the chain corresponds to 225–252 (RLVCTVKEAAAQQQESATTQKAEKEVTR). A helical membrane pass occupies residues 253–274 (MVIIMVVFFLICWVPYASVAFF). Topologically, residues 275–286 (IFSNQGSEFGPI) are extracellular. The helical transmembrane segment at 287–308 (FMTVPAFFAKSSSIYNPVIYIM) threads the bilayer. Lys296 carries the post-translational modification N6-(retinylidene)lysine. Topologically, residues 309-354 (LNKQFRNCMITTLCCGKNPFGEDDASSAATSKTEASSVSSSQVSPA) are cytoplasmic. S-palmitoyl cysteine attachment occurs at residues Cys322 and Cys323. Residues 331–354 (DDASSAATSKTEASSVSSSQVSPA) form a disordered region. Residues 334-354 (SSAATSKTEASSVSSSQVSPA) show a composition bias toward low complexity.

This sequence belongs to the G-protein coupled receptor 1 family. Opsin subfamily. Contains one covalently linked retinal chromophore. Upon light absorption, the covalently bound 11-cis-retinal is converted to all-trans-retinal. After hydrolysis of the Schiff base and release of the covalently bound all-trans-retinal, active rhodopsin is regenerated by binding of a fresh molecule of 11-cis-retinal.

It localises to the membrane. The protein localises to the cell projection. The protein resides in the cilium. It is found in the photoreceptor outer segment. Functionally, photoreceptor required for image-forming vision at low light intensity. Required for photoreceptor cell viability after birth. Light-induced isomerization of 11-cis to all-trans retinal triggers a conformational change that activates signaling via G-proteins. Subsequent receptor phosphorylation mediates displacement of the bound G-protein alpha subunit by arrestin and terminates signaling. This chain is Rhodopsin (RHO), found in Bufo bufo (European toad).